We begin with the raw amino-acid sequence, 888 residues long: ETO1-like protein 1 (888 aa).

In terms of domain architecture, BTB spans 180 to 280; sequence KNVVFKIGEE…ACDRELASLI (101 aa). 5 TPR repeats span residues 381–414, 441–477, 511–544, 637–670, and 711–744; these read VLGFHRLGCMRLLRKEYREAEEAFETAFNLGHVY, SSVSPPLGWMYQERSFYCEGDKKLEDLEKATELDPTL, LECLEIRFCLYLGMDDYEAALRDIQAALTLCPDY, HERLVYEGWILYDTGHCEEGLQKAKESIGIKRSF, and GQALNNLGSVYVDCEKLDLAADCYINALKVRHTR. Residues 755–793 are a coiled coil; the sequence is LRNDKAAAYEEMTRLIEKAQNNASAYEKRSEYCDRELAK. 2 TPR repeats span residues 807–840 and 842–873; these read VYPYRYRAAVLMDSRKEREAITELSRAIAFKADL and LLHLRAAFHEHIGDVTSALRDCRAALSVDPNH.

This sequence belongs to the ETO1 family. Interacts with the C-terminal domain of ACS4, ACS5 and ACS9. In terms of tissue distribution, predominantly expressed in flowers.

It functions in the pathway protein modification; protein ubiquitination. In terms of biological role, possible regulator of the ethylene pathway, which acts by regulating the stability of 1-aminocyclopropane-1-carboxylate synthase (ACS) enzymes. May act as a substrate-specific adapter that connects ACS enzymes, such as ACS5, to ubiquitin ligase complexes, leading to proteasomal degradation of ACS enzymes. The sequence is that of ETO1-like protein 1 (EOL1) from Arabidopsis thaliana (Mouse-ear cress).